The primary structure comprises 862 residues: ATP-dependent helicase Lhr-Core (862 aa).

Gln-37, Lys-60, Thr-61, Asp-178, Glu-179, Val-360, Arg-377, and His-380 together coordinate ATP. Residues Ile-41 to Glu-233 enclose the Helicase ATP-binding domain. The DEAH box signature appears at Asp-178 to His-181. The Helicase C-terminal domain occupies Ala-269–Asp-424. The WH domain stretch occupies residues Val-425–Pro-513. Residues Asp-514–Arg-862 are domain 4.

Belongs to the Lhr helicase family. Lhr-Core subfamily. As to quaternary structure, monomer.

It carries out the reaction Couples ATP hydrolysis with the unwinding of duplex DNA by translocating in the 3'-5' direction.. The enzyme catalyses ATP + H2O = ADP + phosphate + H(+). In terms of biological role, DNA helicase that translocates in a 3'-5' direction on single-stranded (ss)DNA, probably involved in DNA repair. Most active on three- or four-stranded forked DNA; flayed structures and Holliday junction (HJ) substrates are unwound slightly less well. Also unwinds 3'-tailed duplexes; both RNA:DNA hybrids and double-stranded (ds)DNA with a 3'-single strand (ss)DNA loading strand are unwound. Substrates where the helicase loads on a 3'-ssRNA tail (DNA:RNA and RNA:RNA) were not tested. Blunt-ended dsDNA is not a substrate. Probably involved in replication-coupled DNA repair; remodeling of fork DNA after binding by Lhr generates ssDNA for ATP-dependent DNA translocation. The polypeptide is ATP-dependent helicase Lhr-Core (Methanothermobacter thermautotrophicus (strain ATCC 29096 / DSM 1053 / JCM 10044 / NBRC 100330 / Delta H) (Methanobacterium thermoautotrophicum)).